The following is a 58-amino-acid chain: Large ribosomal subunit protein bL32 (58 aa).

Belongs to the bacterial ribosomal protein bL32 family.

The polypeptide is Large ribosomal subunit protein bL32 (Sulfurihydrogenibium sp. (strain YO3AOP1)).